A 92-amino-acid chain; its full sequence is MTRSLGKGPFVANHLLKEIEILNFGGSEEVVVTWSRASTIVPVMIGHTIAIHNGREHLPIYITDRMVGHKLGEFAPTRTFRGHARNDKKSRR.

The protein belongs to the universal ribosomal protein uS19 family.

Its subcellular location is the plastid. Its function is as follows. Protein S19 forms a complex with S13 that binds strongly to the 16S ribosomal RNA. The polypeptide is Small ribosomal subunit protein uS19c (Aneura mirabilis (Parasitic liverwort)).